Consider the following 274-residue polypeptide: Penicillin-insensitive murein endopeptidase (274 aa).

Positions 1-19 are cleaved as a signal peptide; the sequence is MKNTVIALLALLASAGSLA. 3 disulfide bridges follow: cysteine 44-cysteine 265, cysteine 187-cysteine 235, and cysteine 216-cysteine 223. Histidine 110, histidine 113, aspartate 120, aspartate 147, histidine 150, and histidine 211 together coordinate Zn(2+). Residues 224 to 263 form a disordered region; the sequence is EDQAPPPPGDGCGAELQSWFEPPKPGSTPPVKKTPPPLPP. A compositionally biased stretch (pro residues) spans 245–263; sequence PPKPGSTPPVKKTPPPLPP.

This sequence belongs to the peptidase M74 family. In terms of assembly, dimer. It depends on Zn(2+) as a cofactor.

Its subcellular location is the periplasm. Its function is as follows. Murein endopeptidase that cleaves the D-alanyl-meso-2,6-diamino-pimelyl amide bond that connects peptidoglycan strands. Likely plays a role in the removal of murein from the sacculus. The polypeptide is Penicillin-insensitive murein endopeptidase (Klebsiella pneumoniae (strain 342)).